Reading from the N-terminus, the 93-residue chain is Large ribosomal subunit protein uL23 (93 aa).

Belongs to the universal ribosomal protein uL23 family. In terms of assembly, part of the 50S ribosomal subunit. Contacts protein L29, and trigger factor when it is bound to the ribosome.

Its function is as follows. One of the early assembly proteins it binds 23S rRNA. One of the proteins that surrounds the polypeptide exit tunnel on the outside of the ribosome. Forms the main docking site for trigger factor binding to the ribosome. This chain is Large ribosomal subunit protein uL23, found in Campylobacter lari (strain RM2100 / D67 / ATCC BAA-1060).